A 1087-amino-acid chain; its full sequence is Exportin-7 (1087 aa).

Alanine 2 bears the N-acetylalanine mark. The Importin N-terminal domain occupies 30–96 (AEKALVEFTN…RNYVLNYLAT (67 aa)). Serine 570 carries the post-translational modification Phosphoserine.

The protein belongs to the exportin family. As to quaternary structure, binds to nucleoporins. Found in a complex with XPO7, EIF4A1, ARHGAP1, VPS26A, VPS29, VPS35 and SFN. Interacts with ARHGAP1 and SFN. Interacts with Ran and cargo proteins in a GTP-dependent manner. In terms of tissue distribution, highly expressed in testis and spleen, moderate in kidney and liver and low in heart, brain, lung and skeletal muscle.

It is found in the cytoplasm. The protein localises to the nucleus. Functionally, mediates the nuclear export of proteins (cargos) with broad substrate specificity. In the nucleus binds cooperatively to its cargo and to the GTPase Ran in its active GTP-bound form. Docking of this trimeric complex to the nuclear pore complex (NPC) is mediated through binding to nucleoporins. Upon transit of a nuclear export complex into the cytoplasm, disassembling of the complex and hydrolysis of Ran-GTP to Ran-GDP (induced by RANBP1 and RANGAP1, respectively) cause release of the cargo from the export receptor. XPO7 then return to the nuclear compartment and mediate another round of transport. The directionality of nuclear export is thought to be conferred by an asymmetric distribution of the GTP- and GDP-bound forms of Ran between the cytoplasm and nucleus. The sequence is that of Exportin-7 (Xpo7) from Mus musculus (Mouse).